Consider the following 1226-residue polypeptide: AF4/FMR2 family member 3 (1226 aa).

Residues Arg-24–Gln-37 are compositionally biased toward basic and acidic residues. 5 disordered regions span residues Arg-24 to Leu-65, Ser-116 to Gln-164, Glu-197 to Asn-299, Lys-323 to Tyr-496, and Ile-523 to Ala-728. Residues Asp-42–Leu-52 show a composition bias toward polar residues. Positions Ser-123 to Thr-132 are enriched in low complexity. Polar residues-rich tracts occupy residues Leu-251–Cys-261 and Lys-334–Asn-344. Over residues Gln-381–Leu-392 the composition is skewed to low complexity. Residues Ala-396 to Pro-408 show a composition bias toward polar residues. Residues Ser-409–Ser-445 show a composition bias toward low complexity. Over residues Gln-485–Tyr-496 the composition is skewed to polar residues. Over residues Ile-523 to Pro-533 the composition is skewed to basic and acidic residues. 2 stretches are compositionally biased toward low complexity: residues Pro-550 to Ala-561 and Cys-569 to Ala-579. A compositionally biased stretch (basic and acidic residues) spans Arg-589–Glu-607. Residues Thr-668–Asp-678 are compositionally biased toward low complexity. Residues Lys-692–Asp-705 are compositionally biased toward polar residues. Phosphoserine is present on Ser-755. Disordered regions lie at residues Pro-783–Asn-856, Pro-879–Lys-964, and Ala-1100–Asn-1138. Residues Arg-830–Ser-842 show a composition bias toward basic and acidic residues. The segment covering Ser-843–Asn-856 has biased composition (polar residues). The residue at position 881 (Ser-881) is a Phosphoserine. Residues Glu-894–Thr-909 show a composition bias toward polar residues.

It belongs to the AF4 family. Preferentially expressed in lymphoid tissues, highest levels being found in the thymus.

Its subcellular location is the nucleus. In terms of biological role, putative transcription activator that may function in lymphoid development and oncogenesis. Binds, in vitro, to double-stranded DNA. This is AF4/FMR2 family member 3 from Homo sapiens (Human).